A 475-amino-acid chain; its full sequence is FAD-dependent monooxygenase sdgC (475 aa).

The signal sequence occupies residues 1 to 23 (MDKRSFKVIVVGGSIAGLTLAHS). FAD-binding residues include Glu-35, Gly-49, and Arg-126. The N-linked (GlcNAc...) asparagine glycan is linked to Asn-236. Residue Ala-330 participates in FAD binding. A helical membrane pass occupies residues 446 to 466 (ISGVLLLVIPIIALVYGYSVI).

The protein belongs to the paxM FAD-dependent monooxygenase family. It depends on FAD as a cofactor.

It is found in the membrane. It functions in the pathway secondary metabolite biosynthesis. Its function is as follows. FAD-dependent monooxygenase; part of the gene cluster that mediates the biosynthesis of the polyenes aspernidgulenes. The carbon backbone of aspernidgulenes is synthesized by the HR-PKS sdgA, which accepts acetyl-CoA as the starter unit and performs malonyl-CoA extensions as well as regioselective methylation and reduction. The resulting nonaketide offloads the HR-PKS by intramolecular lactonization to yield the 5,6-dihydro-alpha-pyrone-containing hexaenoic acids preaspernidgulene A1 and A2. The FAD-dependent monooxygenase sdgC then installs the first epoxide on the penultimate double bond. Subsequently, the FAD-dependent monooxygenase sdgF presumably generates a ketone intermediate through Meinwald rearrangement involving a hydride shift. Next, sdgC introduces another epoxide on the last olefin of the ketone intermediate after E/Z isomerization. The epoxide hydrolase sdgD then catalyzes stereospecific cyclization of the 5,6-dihydro-alpha-pyrone and opening of the epoxide ring to form an oxygenated trimethylcyclopentanone and an oxabicyclo[2.2.1]heptane unit. Finally, the bicyclic unit undergoes hydrolytic cleavage, either spontaneously or catalyzed by sdgD, to assemble the dimethyl-gamma-lactone moiety in aspernidgulene A1. In Emericella nidulans (strain FGSC A4 / ATCC 38163 / CBS 112.46 / NRRL 194 / M139) (Aspergillus nidulans), this protein is FAD-dependent monooxygenase sdgC.